A 1336-amino-acid polypeptide reads, in one-letter code: Zinc finger protein 335 (1336 aa).

Disordered regions lie at residues 1 to 108 (MEEN…LVHS) and 199 to 222 (PTST…LAQP). Low complexity-rich tracts occupy residues 31 to 45 (TSEA…AATA) and 54 to 65 (SGVGQSSDSGSR). Residues 247-270 (FKCKMCQYRSSTKATLLRHMRERH) form a C2H2-type 1 zinc finger. 2 disordered regions span residues 282-398 (AGKR…PSSS) and 415-442 (VSQS…GRPS). Over residues 300–331 (EEGPEEEEEDDDIVDAGAIDDLEEDSDYNPAE) the composition is skewed to acidic residues. Residues 339–349 (LRLQRPTPSTL) are compositionally biased toward low complexity. The span at 350 to 361 (RPRRRPGRPRKL) shows a compositional bias: basic residues. Basic and acidic residues predominate over residues 362 to 373 (PRLETSDLHDGI). The span at 378–387 (VSSQSTQSPP) shows a compositional bias: polar residues. C2H2-type zinc fingers lie at residues 465–487 (YLCR…VNSH), 495–517 (FKCL…MFNH), 523–545 (YKCD…AAVH), 562–584 (FPCP…MKTH), 590–612 (HMCD…LLTH), 621–643 (FKCE…QLSH), 649–672 (FKCS…AVKH), and 678–701 (FACE…RCRH). 2 disordered regions span residues 732-766 (LKQQ…TPPL) and 961-1013 (LQCG…AAAS). Pro residues predominate over residues 752-766 (PQEPAPFQPPETPPL). A phosphoserine mark is found at serine 975 and serine 1006. 4 consecutive C2H2-type zinc fingers follow at residues 1018-1040 (FSCK…KRAH), 1046-1068 (FKCP…MAQH), 1074-1096 (HQCN…MLTH), and 1102-1125 (FSCH…QRLH). Lysine 1021 is covalently cross-linked (Glycyl lysine isopeptide (Lys-Gly) (interchain with G-Cter in SUMO2)). The residue at position 1148 (serine 1148) is a Phosphoserine.

The protein belongs to the krueppel C2H2-type zinc-finger protein family. In terms of assembly, interacts with NCOA6; may enhance ligand-dependent transcriptional activation by nuclear hormone receptors. Interacts with CNOT6. Interacts with CNOT9; the interaction is direct. Component of a nuclear receptor-mediated transcription complex composed of at least ZNF335, CCAR2 and EMSY; the complex stimulates the transcription of nuclear receptor target genes such as SOX9 and HOXA1. Within the complex interacts with EMSY and interacts (via C-terminus) with CCAR2. Interacts with members of histone H3'Lys4'(H3K4) methyltransferase complexes ASH2L, CXXC1, KMT2A/MLL1, RBBP5, SETD1A and WDR5. Component of a histone methylation complex composed of at least ZNF335, RBBP5, ASH2L and WDR5; the complex may have histone H3-specific methyltransferase activity, however does not have specificity for 'Lys-4' of histone H3. Interacts with RBBP5 and WDR5. Interacts with ASHL2. Components of this complex may associate with components of the ZNF335-CCAR2-EMSY nuclear receptor-mediated transcription complex to form a complex at least composed of ZNF335, HCFC1, CCAR2, EMSY, MKI67, RBBP5, ASH2L and WDR5. Within this complex also interacts with HCFC1 and MKI67.

Its subcellular location is the nucleus. Functionally, component or associated component of some histone methyltransferase complexes may regulate transcription through recruitment of those complexes on gene promoters. Enhances ligand-dependent transcriptional activation by nuclear hormone receptors. Plays an important role in neural progenitor cell proliferation and self-renewal through the regulation of specific genes involved brain development, including REST. Also controls the expression of genes involved in somatic development and regulates, for instance, lymphoblast proliferation. This Rattus norvegicus (Rat) protein is Zinc finger protein 335 (Znf335).